Here is a 144-residue protein sequence, read N- to C-terminus: Large ribosomal subunit protein uL15 (144 aa).

Residues Met1 to Gly52 form a disordered region.

This sequence belongs to the universal ribosomal protein uL15 family. In terms of assembly, part of the 50S ribosomal subunit.

Binds to the 23S rRNA. The sequence is that of Large ribosomal subunit protein uL15 from Actinobacillus pleuropneumoniae serotype 7 (strain AP76).